The primary structure comprises 843 residues: MALPRCMWPNYVWRAMMACVVHRGSGAPLTLCLLGCLLQTFHVLSQKLDDVDPLVTTNFGKIRGIKKELNNEILGPVIQFLGVPYAAPPTGEHRFQPPEPPSPWSDIRNATQFAPVCPQNIIDGRLPEVMLPVWFTNNLDVVSSYVQDQSEDCLYLNIYVPTEDVKRISKECARKPGKKICRKGDIRDSGGPKPVMVYIHGGSYMEGTGNLYDGSVLASYGNVIVITVNYRLGVLGFLSTGDQAAKGNYGLLDLIQALRWTSENIGFFGGDPLRITVFGSGAGGSCVNLLTLSHYSEGNRWSNSTKGLFQRAIAQSGTALSSWAVSFQPAKYARILATKVGCNVSDTVELVECLQKKPYKELVDQDVQPARYHIAFGPVIDGDVIPDDPQILMEQGEFLNYDIMLGVNQGEGLKFVENIVDSDDGVSASDFDFAVSNFVDNLYGYPEGKDVLRETIKFMYTDWADRHNPETRRKTLLALFTDHQWVAPAVATADLHSNFGSPTYFYAFYHHCQTDQVPAWADAAHGDEVPYVLGIPMIGPTELFPCNFSKNDVMLSAVVMTYWTNFAKTGDPNQPVPQDTKFIHTKPNRFEEVAWTRYSQKDQLYLHIGLKPRVKEHYRANKVNLWLELVPHLHNLNDISQYTSTTTKVPSTDITLRPTRKNSTPVTSAFPTAKQDDPKQQPSPFSVDQRDYSTELSVTIAVGASLLFLNILAFAALYYKKDKRRHDVHRRCSPQRTTTNDLTHAPEEEIMSLQMKHTDLDHECESIHPHEVVLRTACPPDYTLAMRRSPDDVPLMTPNTITMIPNTIPGIQPLHTFNTFTGGQNNTLPHPHPHPHSHSTTRV.

Residues 1-45 (MALPRCMWPNYVWRAMMACVVHRGSGAPLTLCLLGCLLQTFHVLS) form the signal peptide. The Extracellular segment spans residues 46–697 (QKLDDVDPLV…DQRDYSTELS (652 aa)). The N-linked (GlcNAc...) (complex) asparagine glycan is linked to N109. 2 disulfide bridges follow: C117–C153 and C172–C181. N-linked (GlcNAc...) (complex) asparagine glycans are attached at residues N303 and N343. 2 cysteine pairs are disulfide-bonded: C342/C353 and C512/C546. An N-linked (GlcNAc...) asparagine glycan is attached at N547. The interval 647 to 688 (TKVPSTDITLRPTRKNSTPVTSAFPTAKQDDPKQQPSPFSVD) is disordered. The segment covering 661–670 (KNSTPVTSAF) has biased composition (polar residues). O-linked (GalNAc...) serine glycosylation is found at S683 and S686. The chain crosses the membrane as a helical span at residues 698–718 (VTIAVGASLLFLNILAFAALY). Residues 719-843 (YKKDKRRHDV…HPHSHSTTRV (125 aa)) lie on the Cytoplasmic side of the membrane. Positions 822-843 (GGQNNTLPHPHPHPHSHSTTRV) are disordered. Residues 831-843 (PHPHPHSHSTTRV) are compositionally biased toward basic residues.

Belongs to the type-B carboxylesterase/lipase family. As to quaternary structure, interacts with neurexins NRXN1, NRXN2 and NRXN3. Interaction with neurexins is mediated by heparan sulfate glycan modification on neurexin. Interacts with NLGN3. Interacts (via its C-terminus) with DLG4/PSD-95 (via PDZ domain 3). Interacts with GOPC. Interacts with AIP1 and PDZRN3. Post-translationally, the N-terminus is blocked. In terms of tissue distribution, expressed in brain, almost exclusively in neurons, and spinal cord. Detected in pancreas islet beta cells.

The protein resides in the cell membrane. It localises to the postsynaptic density. The protein localises to the synaptic cleft. Its subcellular location is the synaptic cell membrane. Its function is as follows. Cell surface protein involved in cell-cell-interactions via its interactions with neurexin family members. Plays a role in synapse function and synaptic signal transmission, and probably mediates its effects by recruiting and clustering other synaptic proteins. May promote the initial formation of synapses, but is not essential for this. In vitro, triggers the de novo formation of presynaptic structures. May be involved in specification of excitatory synapses. Required to maintain wakefulness quality and normal synchrony of cerebral cortex activity during wakefulness and sleep. The protein is involved in nervous system development. This chain is Neuroligin-1 (Nlgn1), found in Rattus norvegicus (Rat).